The chain runs to 415 residues: Very late expression factor 1 (415 aa).

The 187-residue stretch at 171–357 (REIINTILDC…DESDDNDEDD (187 aa)) folds into the Tyr recombinase domain. Active-site residues include Arg-214, Lys-242, Arg-307, and His-330. The tract at residues 339-415 (YLNKYDVGVD…GDDADLLSFN (77 aa)) is disordered. Catalysis depends on Tyr-343, which acts as the O-(3'-phospho-DNA)-tyrosine intermediate. The segment covering 346–363 (GVDESDDNDEDDDDDEND) has biased composition (acidic residues). Positions 375-404 (NISNYDINNSSSGNSSSNNTSGNDFNNNIS) are enriched in low complexity.

The protein belongs to the 'phage' integrase family.

Involved in very late gene activation. This chain is Very late expression factor 1 (VLF-1), found in Heliothis zea nuclear polyhedrosis virus (HzSNPV).